The following is a 176-amino-acid chain: Dual-action ribosomal maturation protein DarP (176 aa).

Belongs to the DarP family.

The protein resides in the cytoplasm. In terms of biological role, member of a network of 50S ribosomal subunit biogenesis factors which assembles along the 30S-50S interface, preventing incorrect 23S rRNA structures from forming. Promotes peptidyl transferase center (PTC) maturation. This chain is Dual-action ribosomal maturation protein DarP, found in Aliivibrio fischeri (strain MJ11) (Vibrio fischeri).